A 493-amino-acid polypeptide reads, in one-letter code: MSLLKMEYNLYAELKKMTCGQPLSLFNEDGDFVEVEPGSSFKFLIPKGFYASPSVKTSLVFETLTTTDNKITSINPTNAPKLYPLQRKVVSEVVSNMRKMIESKRPLYITLHLACGFGKTITTCYLMATHGRKTVICVPNKMLIHQWKTQVEAVGLEHKISIDGVSSLLKELKTQSPDVLIVVSRHLTNDAFCKYINKHYDLFILDESHTYNLMNNTAVTRFLAYYPPMMCYFLTATPRPANRIYCNSIINIAKLSDLKKTIYAVDSFFEPYSTDNIRHMVKRLDGPSNKYHIYTEKLLSVDEPRNQLILNTLVEEFKSGTINRILVITKLREHMVLFYKRLLDLFGPEVVFIGDAQNRRTPDMVKSIKELNRFIFVSTLFYSGTGLDIPSLDSLFICSAVINNMQIEQLLGRVCRETELLDRTVYVFPNTSIKEIKYMIGNFMQRIISLSVDKLGFKQKSYRKHQESDPTSVCTTSSREERVLNRIFNSQNR.

The 157-residue stretch at 100–256 (MIESKRPLYI…NSIINIAKLS (157 aa)) folds into the Helicase ATP-binding domain. 113-120 (LACGFGKT) provides a ligand contact to ATP. Residues 206–209 (DESH) carry the DESH box motif.

It belongs to the helicase family. Poxviruses subfamily. Interacts with G2. Might be part of a transcription complex composed at least of G2, A18, and H5.

The protein resides in the virion. In terms of biological role, DNA helicase which seems to act as a postreplicative transcription termination factor. Involved in ATP-dependent release of nascent RNA. Forms a stable complex with single-stranded DNA, and to a lesser extent RNA. The chain is Transcript termination protein A18 from Vaccinia virus (strain Tian Tan) (VACV).